The primary structure comprises 871 residues: Nonsense-mediated mRNA decay factor SMG8 (871 aa).

The segment at 541–596 is disordered; it reads LDDMELPESLQQSYTSSEDSSEDDDDFAIQTASSEDSLSGSDSYARPGSRRDEFES. Residues 573–583 show a composition bias toward low complexity; that stretch reads SSEDSLSGSDS.

It belongs to the SMG8 family.

In terms of biological role, involved in nonsense-mediated decay (NMD) of mRNAs containing premature stop codons. Probable component of kinase complex containing smg-1 and recruited to stalled ribosomes. The sequence is that of Nonsense-mediated mRNA decay factor SMG8 (smg-8) from Caenorhabditis briggsae.